The sequence spans 655 residues: tRNA-guanine(15) transglycosylase (655 aa).

The active-site Nucleophile is the Asp-89. 2 residues coordinate substrate: Asp-124 and Ala-195. Zn(2+)-binding residues include Cys-281, Cys-283, and Cys-286. The region spanning 577 to 652 (KYRVVVNKEA…LAVKVRGGLK (76 aa)) is the PUA domain.

This sequence belongs to the archaeosine tRNA-ribosyltransferase family. Requires Zn(2+) as cofactor.

It carries out the reaction guanosine(15) in tRNA + 7-cyano-7-deazaguanine = 7-cyano-7-carbaguanosine(15) in tRNA + guanine. Its pathway is tRNA modification; archaeosine-tRNA biosynthesis. In terms of biological role, exchanges the guanine residue with 7-cyano-7-deazaguanine (preQ0) at position 15 in the dihydrouridine loop (D-loop) of archaeal tRNAs. Can also utilize guanine as substrate. This is tRNA-guanine(15) transglycosylase from Methanocaldococcus jannaschii (strain ATCC 43067 / DSM 2661 / JAL-1 / JCM 10045 / NBRC 100440) (Methanococcus jannaschii).